A 560-amino-acid polypeptide reads, in one-letter code: Protein SINE1 (560 aa).

Position 2 is an N-acetylglycine (G2). The segment at 7–287 (PILRQELANL…VRGAAYEAMM (281 aa)) is ARMADILLO-type fold. In terms of domain architecture, KASH spans 517 to 560 (KKKKKKMSYAKLVIAISFVVVALFATVILMVNQDDDVGYYTVPT). A helical membrane pass occupies residues 528–548 (LVIAISFVVVALFATVILMVN). The short motif at 557–560 (TVPT) is the Required for nuclear localization element.

Interacts with SUN1 and SUN2. Binds to F-actin. Preferentially expressed in guards cells, but also detected in root cells.

It is found in the nucleus membrane. Its function is as follows. Plays a role in nucleus positioning in guard cells. The protein is Protein SINE1 of Arabidopsis thaliana (Mouse-ear cress).